The following is a 267-amino-acid chain: 4-hydroxy-tetrahydrodipicolinate reductase (267 aa).

Residues 8–13, Glu34, 98–100, and 122–125 each bind NAD(+); these read GIAGRM, GST, and SPNM. His155 functions as the Proton donor/acceptor in the catalytic mechanism. Residue His156 participates in (S)-2,3,4,5-tetrahydrodipicolinate binding. The active-site Proton donor is the Lys159. Residue 165–166 coordinates (S)-2,3,4,5-tetrahydrodipicolinate; that stretch reads GT.

It belongs to the DapB family.

The protein resides in the cytoplasm. The catalysed reaction is (S)-2,3,4,5-tetrahydrodipicolinate + NAD(+) + H2O = (2S,4S)-4-hydroxy-2,3,4,5-tetrahydrodipicolinate + NADH + H(+). It carries out the reaction (S)-2,3,4,5-tetrahydrodipicolinate + NADP(+) + H2O = (2S,4S)-4-hydroxy-2,3,4,5-tetrahydrodipicolinate + NADPH + H(+). Its pathway is amino-acid biosynthesis; L-lysine biosynthesis via DAP pathway; (S)-tetrahydrodipicolinate from L-aspartate: step 4/4. In terms of biological role, catalyzes the conversion of 4-hydroxy-tetrahydrodipicolinate (HTPA) to tetrahydrodipicolinate. This is 4-hydroxy-tetrahydrodipicolinate reductase from Syntrophobacter fumaroxidans (strain DSM 10017 / MPOB).